The sequence spans 457 residues: Oxygen-independent coproporphyrinogen III oxidase (457 aa).

One can recognise a Radical SAM core domain in the interval 47 to 279; it reads LKNPMPLSLY…EILESLISFL (233 aa). An S-adenosyl-L-methionine-binding site is contributed by Tyr-56. Residues Cys-62 and Cys-66 each coordinate [4Fe-4S] cluster. Position 68 (Phe-68) interacts with S-adenosyl-L-methionine. Cys-69 serves as a coordination point for [4Fe-4S] cluster. S-adenosyl-L-methionine is bound by residues Gly-113, 114-115, Glu-147, Gln-174, Arg-186, Asp-211, Ala-245, and Ile-331; that span reads GT.

Belongs to the anaerobic coproporphyrinogen-III oxidase family. In terms of assembly, monomer. Requires [4Fe-4S] cluster as cofactor.

Its subcellular location is the cytoplasm. The enzyme catalyses coproporphyrinogen III + 2 S-adenosyl-L-methionine = protoporphyrinogen IX + 2 5'-deoxyadenosine + 2 L-methionine + 2 CO2. It participates in porphyrin-containing compound metabolism; protoporphyrin-IX biosynthesis; protoporphyrinogen-IX from coproporphyrinogen-III (AdoMet route): step 1/1. Functionally, involved in the heme biosynthesis. Catalyzes the anaerobic oxidative decarboxylation of propionate groups of rings A and B of coproporphyrinogen III to yield the vinyl groups in protoporphyrinogen IX. The protein is Oxygen-independent coproporphyrinogen III oxidase (hemN) of Helicobacter pylori (strain ATCC 700392 / 26695) (Campylobacter pylori).